The primary structure comprises 409 residues: Elongation factor Tu (409 aa).

The tr-type G domain maps to 10-214; sequence KPHVNIGTIG…AVDSYIPDPE (205 aa). The G1 stretch occupies residues 19–26; the sequence is GHVDHGKT. 19 to 26 lines the GTP pocket; that stretch reads GHVDHGKT. Thr26 contacts Mg(2+). The interval 60–64 is G2; the sequence is GITIN. Residues 81–84 are G3; sequence DCPG. GTP contacts are provided by residues 81–85 and 136–139; these read DCPGH and NKED. Residues 136–139 form a G4 region; the sequence is NKED. The segment at 174 to 176 is G5; sequence SGL.

Monomer.

Its subcellular location is the cytoplasm. It carries out the reaction GTP + H2O = GDP + phosphate + H(+). Functionally, GTP hydrolase that promotes the GTP-dependent binding of aminoacyl-tRNA to the A-site of ribosomes during protein biosynthesis. In Nostoc sp. (strain PCC 7120 / SAG 25.82 / UTEX 2576), this protein is Elongation factor Tu.